The sequence spans 610 residues: UvrABC system protein C (610 aa).

One can recognise a GIY-YIG domain in the interval 16-94 (SQPGVYRMYD…IKLYQPRYNV (79 aa)). The UVR domain maps to 204-239 (DQVLTQLISRMETASQNLEFEEAARIRDQIQAVRRV).

This sequence belongs to the UvrC family. As to quaternary structure, interacts with UvrB in an incision complex.

Its subcellular location is the cytoplasm. In terms of biological role, the UvrABC repair system catalyzes the recognition and processing of DNA lesions. UvrC both incises the 5' and 3' sides of the lesion. The N-terminal half is responsible for the 3' incision and the C-terminal half is responsible for the 5' incision. The protein is UvrABC system protein C of Escherichia coli (strain ATCC 8739 / DSM 1576 / NBRC 3972 / NCIMB 8545 / WDCM 00012 / Crooks).